Consider the following 379-residue polypeptide: UDP-4-amino-4-deoxy-L-arabinose--oxoglutarate aminotransferase (379 aa).

Residue K183 is modified to N6-(pyridoxal phosphate)lysine.

It belongs to the DegT/DnrJ/EryC1 family. ArnB subfamily. Homodimer. The cofactor is pyridoxal 5'-phosphate.

It catalyses the reaction UDP-4-amino-4-deoxy-beta-L-arabinose + 2-oxoglutarate = UDP-beta-L-threo-pentopyranos-4-ulose + L-glutamate. Its pathway is nucleotide-sugar biosynthesis; UDP-4-deoxy-4-formamido-beta-L-arabinose biosynthesis; UDP-4-deoxy-4-formamido-beta-L-arabinose from UDP-alpha-D-glucuronate: step 2/3. It functions in the pathway bacterial outer membrane biogenesis; lipopolysaccharide biosynthesis. Catalyzes the conversion of UDP-4-keto-arabinose (UDP-Ara4O) to UDP-4-amino-4-deoxy-L-arabinose (UDP-L-Ara4N). The modified arabinose is attached to lipid A and is required for resistance to polymyxin and cationic antimicrobial peptides. The protein is UDP-4-amino-4-deoxy-L-arabinose--oxoglutarate aminotransferase of Pseudomonas fluorescens (strain ATCC BAA-477 / NRRL B-23932 / Pf-5).